The primary structure comprises 354 residues: Ubiquinol oxidase 1a, mitochondrial (354 aa).

Residues 1 to 62 constitute a mitochondrion transit peptide; it reads MMITRGGAKA…RAPTIGGMRF (62 aa). The interval 68–99 is disordered; sequence LGEKTPMKEEDANQKKTENESTGGDAAGGNNK. The segment covering 72–86 has biased composition (basic and acidic residues); that stretch reads TPMKEEDANQKKTEN. A helical transmembrane segment spans residues 179-199; sequence AMMLETVAAVPGMVGGMLLHC. The Fe cation site is built by Glu-183, Glu-222, and His-225. The helical transmembrane segment at 241–261 threads the bilayer; sequence ALVITVQGVFFNAYFLGYLIS. Residues Glu-273, Glu-324, and His-327 each coordinate Fe cation.

The protein belongs to the alternative oxidase family. Homodimer; disulfide-linked. Fe cation is required as a cofactor. Expressed in roots, stems, cotyledons, leaves and flowers. High expression in sepals.

It is found in the mitochondrion inner membrane. The enzyme catalyses 2 a ubiquinol + O2 = 2 a ubiquinone + 2 H2O. When the two monomeric subunits are covalently linked by a S-S bond, the enzyme is essentially inactive. When the disulfide bond is reduced, its component sulfhydryls can associate with K-keto acids through formation of a thiohemiacetal, resulting in enzyme activation. Activated by glyoxylate, irrespective to the substitution found at Cys-127. That suggests the presence of a second activation site, possibly Cys-177. Functionally, catalyzes the cyanide-resistant oxidation of ubiquinol and the reduction of molecular oxygen to water, but does not translocate protons and consequently is not linked to oxidative phosphorylation. Increases respiration when the cytochrome respiratory pathway is restricted, or in response to low temperatures. This is Ubiquinol oxidase 1a, mitochondrial (AOX1A) from Arabidopsis thaliana (Mouse-ear cress).